A 339-amino-acid polypeptide reads, in one-letter code: Holliday junction branch migration complex subunit RuvB (339 aa).

Positions 1-181 are large ATPase domain (RuvB-L); sequence MEERLVSGYE…FGMVHRLEFY (181 aa). Residues Leu20, Arg21, Gly62, Lys65, Thr66, Thr67, 128 to 130, Arg171, Tyr181, and Arg218 each bind ATP; that span reads EDF. Mg(2+) is bound at residue Thr66. The tract at residues 182–252 is small ATPAse domain (RuvB-S); that stretch reads SVEELMLIIN…NAKAALDLLE (71 aa). The head domain (RuvB-H) stretch occupies residues 255-339; the sequence is ELGLDPTDRL…NKNAGELSLW (85 aa). DNA contacts are provided by Arg310 and Arg315.

Belongs to the RuvB family. Homohexamer. Forms an RuvA(8)-RuvB(12)-Holliday junction (HJ) complex. HJ DNA is sandwiched between 2 RuvA tetramers; dsDNA enters through RuvA and exits via RuvB. An RuvB hexamer assembles on each DNA strand where it exits the tetramer. Each RuvB hexamer is contacted by two RuvA subunits (via domain III) on 2 adjacent RuvB subunits; this complex drives branch migration. In the full resolvosome a probable DNA-RuvA(4)-RuvB(12)-RuvC(2) complex forms which resolves the HJ.

The protein resides in the cytoplasm. It carries out the reaction ATP + H2O = ADP + phosphate + H(+). Its function is as follows. The RuvA-RuvB-RuvC complex processes Holliday junction (HJ) DNA during genetic recombination and DNA repair, while the RuvA-RuvB complex plays an important role in the rescue of blocked DNA replication forks via replication fork reversal (RFR). RuvA specifically binds to HJ cruciform DNA, conferring on it an open structure. The RuvB hexamer acts as an ATP-dependent pump, pulling dsDNA into and through the RuvAB complex. RuvB forms 2 homohexamers on either side of HJ DNA bound by 1 or 2 RuvA tetramers; 4 subunits per hexamer contact DNA at a time. Coordinated motions by a converter formed by DNA-disengaged RuvB subunits stimulates ATP hydrolysis and nucleotide exchange. Immobilization of the converter enables RuvB to convert the ATP-contained energy into a lever motion, pulling 2 nucleotides of DNA out of the RuvA tetramer per ATP hydrolyzed, thus driving DNA branch migration. The RuvB motors rotate together with the DNA substrate, which together with the progressing nucleotide cycle form the mechanistic basis for DNA recombination by continuous HJ branch migration. Branch migration allows RuvC to scan DNA until it finds its consensus sequence, where it cleaves and resolves cruciform DNA. This Carboxydothermus hydrogenoformans (strain ATCC BAA-161 / DSM 6008 / Z-2901) protein is Holliday junction branch migration complex subunit RuvB.